The following is a 458-amino-acid chain: tRNA modification GTPase MnmE (458 aa).

Residues R26, E88, and R127 each coordinate (6S)-5-formyl-5,6,7,8-tetrahydrofolate. Residues 224 to 378 (GLSTAIIGRP…IEDRINQLFF (155 aa)) enclose the TrmE-type G domain. K(+) is bound at residue N234. GTP-binding positions include 234-239 (NVGKSS), 253-259 (TDIAGTT), and 278-281 (DTAG). S238 is a binding site for Mg(2+). Residues T253, I255, and T258 each coordinate K(+). Position 259 (T259) interacts with Mg(2+). Residue K458 coordinates (6S)-5-formyl-5,6,7,8-tetrahydrofolate.

Belongs to the TRAFAC class TrmE-Era-EngA-EngB-Septin-like GTPase superfamily. TrmE GTPase family. As to quaternary structure, homodimer. Heterotetramer of two MnmE and two MnmG subunits. The cofactor is K(+).

The protein localises to the cytoplasm. Exhibits a very high intrinsic GTPase hydrolysis rate. Involved in the addition of a carboxymethylaminomethyl (cmnm) group at the wobble position (U34) of certain tRNAs, forming tRNA-cmnm(5)s(2)U34. The chain is tRNA modification GTPase MnmE from Streptococcus pyogenes serotype M18 (strain MGAS8232).